A 332-amino-acid chain; its full sequence is Glyceraldehyde-3-phosphate dehydrogenase (332 aa).

Residues 11–12 (RI), D34, R78, and S120 contribute to the NAD(+) site. D-glyceraldehyde 3-phosphate-binding positions include 151–153 (SCT), T182, R197, 210–211 (TG), and R233. Residue C152 is the Nucleophile of the active site. N314 is an NAD(+) binding site.

Belongs to the glyceraldehyde-3-phosphate dehydrogenase family. As to quaternary structure, homotetramer.

It localises to the cytoplasm. The catalysed reaction is D-glyceraldehyde 3-phosphate + phosphate + NAD(+) = (2R)-3-phospho-glyceroyl phosphate + NADH + H(+). It functions in the pathway carbohydrate degradation; glycolysis; pyruvate from D-glyceraldehyde 3-phosphate: step 1/5. Catalyzes the oxidative phosphorylation of glyceraldehyde 3-phosphate (G3P) to 1,3-bisphosphoglycerate (BPG) using the cofactor NAD. The first reaction step involves the formation of a hemiacetal intermediate between G3P and a cysteine residue, and this hemiacetal intermediate is then oxidized to a thioester, with concomitant reduction of NAD to NADH. The reduced NADH is then exchanged with the second NAD, and the thioester is attacked by a nucleophilic inorganic phosphate to produce BPG. The sequence is that of Glyceraldehyde-3-phosphate dehydrogenase (gap) from Kitasatospora aureofaciens (Streptomyces aureofaciens).